The sequence spans 433 residues: GTPase Der (433 aa).

EngA-type G domains follow at residues 3–167 and 175–349; these read KIVS…DKNI and PRIA…FNLR. Residues 9–16, 56–60, 119–122, 181–188, 228–232, and 293–296 each bind GTP; these read GRPNVGKS, DTGGY, NKID, DTAGI, and NKWD. The KH-like domain occupies 350-433; sequence LRIKTSLLNK…IPIKILFRLK (84 aa).

Belongs to the TRAFAC class TrmE-Era-EngA-EngB-Septin-like GTPase superfamily. EngA (Der) GTPase family. As to quaternary structure, associates with the 50S ribosomal subunit.

GTPase that plays an essential role in the late steps of ribosome biogenesis. This chain is GTPase Der, found in Karelsulcia muelleri (strain GWSS) (Sulcia muelleri).